The following is a 440-amino-acid chain: Thymidine phosphorylase (440 aa).

It belongs to the thymidine/pyrimidine-nucleoside phosphorylase family. As to quaternary structure, homodimer.

It carries out the reaction thymidine + phosphate = 2-deoxy-alpha-D-ribose 1-phosphate + thymine. It functions in the pathway pyrimidine metabolism; dTMP biosynthesis via salvage pathway; dTMP from thymine: step 1/2. In terms of biological role, the enzymes which catalyze the reversible phosphorolysis of pyrimidine nucleosides are involved in the degradation of these compounds and in their utilization as carbon and energy sources, or in the rescue of pyrimidine bases for nucleotide synthesis. This Salmonella dublin (strain CT_02021853) protein is Thymidine phosphorylase.